We begin with the raw amino-acid sequence, 389 residues long: Dual-specificity RNA methyltransferase RlmN (389 aa).

The Proton acceptor role is filled by E110. Positions 116 to 355 constitute a Radical SAM core domain; the sequence is EKDRATLCVS…TIVRKTRGDD (240 aa). Residues C123 and C360 are joined by a disulfide bond. Positions 130, 134, and 137 each coordinate [4Fe-4S] cluster. S-adenosyl-L-methionine contacts are provided by residues 184–185, S216, 238–240, and N317; these read GE and SLH. C360 acts as the S-methylcysteine intermediate in catalysis.

The protein belongs to the radical SAM superfamily. RlmN family. [4Fe-4S] cluster is required as a cofactor.

It is found in the cytoplasm. It carries out the reaction adenosine(2503) in 23S rRNA + 2 reduced [2Fe-2S]-[ferredoxin] + 2 S-adenosyl-L-methionine = 2-methyladenosine(2503) in 23S rRNA + 5'-deoxyadenosine + L-methionine + 2 oxidized [2Fe-2S]-[ferredoxin] + S-adenosyl-L-homocysteine. It catalyses the reaction adenosine(37) in tRNA + 2 reduced [2Fe-2S]-[ferredoxin] + 2 S-adenosyl-L-methionine = 2-methyladenosine(37) in tRNA + 5'-deoxyadenosine + L-methionine + 2 oxidized [2Fe-2S]-[ferredoxin] + S-adenosyl-L-homocysteine. In terms of biological role, specifically methylates position 2 of adenine 2503 in 23S rRNA and position 2 of adenine 37 in tRNAs. m2A2503 modification seems to play a crucial role in the proofreading step occurring at the peptidyl transferase center and thus would serve to optimize ribosomal fidelity. This chain is Dual-specificity RNA methyltransferase RlmN, found in Erwinia tasmaniensis (strain DSM 17950 / CFBP 7177 / CIP 109463 / NCPPB 4357 / Et1/99).